Reading from the N-terminus, the 385-residue chain is Na(+)/H(+) antiporter NhaA (385 aa).

Transmembrane regions (helical) follow at residues 9–29 (YSAI…NVLD), 45–65 (IFGL…VFFF), 87–107 (IIPG…YLSV), 114–134 (GWPV…AIFG), 155–175 (AGIV…WIIV), 198–218 (TFLI…SVYQ), 220–235 (GIHA…IMLN), 245–265 (ALEP…AAMV), 282–302 (ILLG…IIAL), 312–332 (FFNL…SLLM), and 345–365 (QGVI…IILM).

The protein belongs to the NhaA Na(+)/H(+) (TC 2.A.33) antiporter family.

It localises to the cell membrane. It catalyses the reaction Na(+)(in) + 2 H(+)(out) = Na(+)(out) + 2 H(+)(in). Its function is as follows. Na(+)/H(+) antiporter that extrudes sodium in exchange for external protons. The chain is Na(+)/H(+) antiporter NhaA from Tropheryma whipplei (strain Twist) (Whipple's bacillus).